The chain runs to 347 residues: uncharacterized protein (347 aa).

Residues aspartate 207, aspartate 218, histidine 279, glutamate 312, and glutamate 326 each contribute to the Mn(2+) site.

Belongs to the peptidase M24B family. Requires Mn(2+) as cofactor.

This is an uncharacterized protein from Methanocaldococcus jannaschii (strain ATCC 43067 / DSM 2661 / JAL-1 / JCM 10045 / NBRC 100440) (Methanococcus jannaschii).